The sequence spans 378 residues: Alcohol dehydrogenase (378 aa).

Fe cation is bound by residues Asp-195, His-199, His-262, and His-274.

Belongs to the iron-containing alcohol dehydrogenase family. Requires Fe(2+) as cofactor. It depends on Mn(2+) as a cofactor.

The enzyme catalyses a primary alcohol + NAD(+) = an aldehyde + NADH + H(+). The catalysed reaction is butan-1-ol + NAD(+) = butanal + NADH + H(+). It catalyses the reaction hexan-1-ol + NAD(+) = hexanal + NADH + H(+). It carries out the reaction ethanol + NAD(+) = acetaldehyde + NADH + H(+). Thermostable type III alcohol dehydrogenase. For oxidation activity, the best substrates are 1-butanol and 1-hexanol, followed by ethanol. Shows lower activity with ethylene glycol, isopentanol, isopropanol and glycerol. Displays higher reduction activity in the presence of butanal, followed by acetaldehyde. Has lower activity with hexanal and acetone. This Thermococcus barophilus protein is Alcohol dehydrogenase.